Consider the following 875-residue polypeptide: Serrate RNA effector molecule homolog (875 aa).

The interval 1–90 (MGDSDDEYDR…RRDWDEHSSD (90 aa)) is disordered. Gly-2 is modified (N-acetylglycine). Ser-4 bears the Phosphoserine mark. At Tyr-8 the chain carries Phosphotyrosine. Basic and acidic residues predominate over residues 8–73 (YDRRRRDKFR…ERFSPPRHEL (66 aa)). Phosphoserine is present on residues Ser-67, Ser-74, and Ser-136. A Glycyl lysine isopeptide (Lys-Gly) (interchain with G-Cter in SUMO2) cross-link involves residue Lys-150. A disordered region spans residues 272–411 (EEEEQAGKTG…KPKDAAGLEC (140 aa)). Basic and acidic residues predominate over residues 297–345 (EGERKANDKDEKKEDGKQAENDSSNDDKTKKSEGDGDKEEKKEEAEKEA). The segment covering 369–386 (SESESEGGQAEEEKEEAE) has biased composition (acidic residues). Positions 387 to 411 (EALKEKEKPKEEEKEKPKDAAGLEC) are enriched in basic and acidic residues. A phosphoserine mark is found at Ser-492 and Ser-539. Residue Thr-543 is modified to Phosphothreonine. Position 569 is a phosphoserine (Ser-569). The interval 571 to 597 (EEEELLGSSGGPPPEEPPKEGNPAEIN) is disordered. At Thr-670 the chain carries Phosphothreonine. A Phosphoserine modification is found at Ser-678. Omega-N-methylarginine is present on residues Arg-832, Arg-839, and Arg-849. A disordered region spans residues 834 to 853 (NYDAFRGQGGYPGKPRNRMV).

The protein belongs to the ARS2 family. In terms of assembly, interacts with CASP8AP2 and ERBB4. Interacts with NCBP1/CBP80 and DROSHA. Interacts with LUZP4. Interacts with NCBP2/CBP20 and NCBP3. Interacts with MTREX. Widely expressed, with a preference for proliferating cells. Highly expressed in hematopoietic tissues and reduced or absent expression in parenchymal organs like liver and kidney. In the brain, expressed in the subventricular zone by niche astrocytes, ependymal cells and neural stem cells. In this cerebral context, expressed in slowly dividing cells.

Its subcellular location is the nucleus. The protein localises to the nucleoplasm. It localises to the cytoplasm. Acts as a mediator between the cap-binding complex (CBC) and the primary microRNAs (miRNAs) processing machinery during cell proliferation. Contributes to the stability and delivery of capped primary miRNA transcripts to the primary miRNA processing complex containing DGCR8 and DROSHA, thereby playing a role in RNA-mediated gene silencing (RNAi) by miRNAs. Binds capped RNAs (m7GpppG-capped RNA); however interaction is probably mediated via its interaction with NCBP1/CBP80 component of the CBC complex. Involved in cell cycle progression at S phase. Does not directly confer arsenite resistance but rather modulates arsenic sensitivity. Independently of its activity on miRNAs, necessary and sufficient to promote neural stem cell self-renewal. Does so by directly binding SOX2 promoter and positively regulating its transcription. This Mus musculus (Mouse) protein is Serrate RNA effector molecule homolog (Srrt).